A 208-amino-acid chain; its full sequence is Na(+)-translocating NADH-quinone reductase subunit D (208 aa).

5 helical membrane passes run 42–62 (IVMG…ISLV), 72–92 (IIVQ…LLQA), 103–123 (VFVG…AFAM), 131–151 (LIDG…VATV), and 178–198 (NGLF…IWGL).

It belongs to the NqrDE/RnfAE family. Composed of six subunits; NqrA, NqrB, NqrC, NqrD, NqrE and NqrF.

Its subcellular location is the cell inner membrane. It catalyses the reaction a ubiquinone + n Na(+)(in) + NADH + H(+) = a ubiquinol + n Na(+)(out) + NAD(+). Functionally, NQR complex catalyzes the reduction of ubiquinone-1 to ubiquinol by two successive reactions, coupled with the transport of Na(+) ions from the cytoplasm to the periplasm. NqrA to NqrE are probably involved in the second step, the conversion of ubisemiquinone to ubiquinol. The chain is Na(+)-translocating NADH-quinone reductase subunit D from Neisseria meningitidis serogroup B (strain ATCC BAA-335 / MC58).